We begin with the raw amino-acid sequence, 424 residues long: MLDIKRIRTDFEAVAEKLATRGVDAAVLNEMKEIDAKRRNILVKVETLKAERNTVSAEIAQAKRNKENTDDKIAAMQNLSAEVKALDAELAEIDAKLTEFTTTLPNIPADSVPVGADEDDNVEVRRWGTPREFDFEPKAHWDLGEDLGILDWERGGKVTGARFLFYKGLGARLERAIYNFMLDEHGKEGYTEVITPYIVNHDSMFGTGQYPKFKEDTFELSDTNFVLIPTAEVPLANYYRDEILDGKDLPIYFTAMSPSFRSEAGSAGRDTRGLIRLHQFHKVEMVKFAKPEESYEELEKMTANAENILQKLNLPYRVVALSTGDMGFSAAKTYDLEVWIPAQNNYREISSCSNTEDFQARRAQIRYRDEADGKVKLLHTLNGSGLAVGRTVAAILENYQNEDGSVTIPEALRPYMGGAEVIKP.

230–232 provides a ligand contact to L-serine; the sequence is TAE. ATP is bound at residue 261–263; the sequence is RSE. Glu-284 serves as a coordination point for L-serine. Residue 348–351 coordinates ATP; it reads EISS. Ser-384 lines the L-serine pocket.

It belongs to the class-II aminoacyl-tRNA synthetase family. Type-1 seryl-tRNA synthetase subfamily. As to quaternary structure, homodimer. The tRNA molecule binds across the dimer.

The protein localises to the cytoplasm. It catalyses the reaction tRNA(Ser) + L-serine + ATP = L-seryl-tRNA(Ser) + AMP + diphosphate + H(+). The enzyme catalyses tRNA(Sec) + L-serine + ATP = L-seryl-tRNA(Sec) + AMP + diphosphate + H(+). It participates in aminoacyl-tRNA biosynthesis; selenocysteinyl-tRNA(Sec) biosynthesis; L-seryl-tRNA(Sec) from L-serine and tRNA(Sec): step 1/1. Functionally, catalyzes the attachment of serine to tRNA(Ser). Is also able to aminoacylate tRNA(Sec) with serine, to form the misacylated tRNA L-seryl-tRNA(Sec), which will be further converted into selenocysteinyl-tRNA(Sec). This chain is Serine--tRNA ligase, found in Streptococcus pneumoniae (strain 70585).